We begin with the raw amino-acid sequence, 290 residues long: NAD kinase (290 aa).

Asp73 serves as the catalytic Proton acceptor. NAD(+) is bound by residues 73–74, 147–148, Arg158, Arg175, Asp177, 188–193, and Gln246; these read DG, ND, and TAYALS.

It belongs to the NAD kinase family. A divalent metal cation serves as cofactor.

It is found in the cytoplasm. It catalyses the reaction NAD(+) + ATP = ADP + NADP(+) + H(+). Involved in the regulation of the intracellular balance of NAD and NADP, and is a key enzyme in the biosynthesis of NADP. Catalyzes specifically the phosphorylation on 2'-hydroxyl of the adenosine moiety of NAD to yield NADP. In Thiobacillus denitrificans (strain ATCC 25259 / T1), this protein is NAD kinase.